Consider the following 1269-residue polypeptide: Multifunctional 2-oxoglutarate metabolism enzyme (1269 aa).

The 2-oxoglutarate dehydrogenase E1, N-terminal part stretch occupies residues 1-41; the sequence is MSSSPSPFGQNEWLVEEMYRKFREDPSSVDPSWHEFLVDYN. Basic and acidic residues predominate over residues 23–37; the sequence is REDPSSVDPSWHEFL. The interval 23-145 is disordered; sequence REDPSSVDPS…AQPADDSDQN (123 aa). The tract at residues 42-107 is linker; that stretch reads PEPTTDSSAS…SKPQAKAKPA (66 aa). Residues 43 to 58 show a composition bias toward polar residues; that stretch reads EPTTDSSASENGQQTR. The segment covering 63 to 75 has biased composition (pro residues); it reads KAPPEPAPAPAPK. The succinyltransferase E2 stretch occupies residues 108–378; sequence ESKSSTKPAD…LRTVHQLLLS (271 aa). H357 (proton acceptor; for succinyltransferase activity) is an active-site residue. The 2-oxoglutarate dehydrogenase E1, C-terminal part stretch occupies residues 379–1269; sequence DDFFDEIFRE…QEILDEAFAP (891 aa). Residue R583 coordinates thiamine diphosphate. The 2-oxoglutarate site is built by H622 and S647. Thiamine diphosphate contacts are provided by S647, L649, D686, A687, A688, and N719. D686 serves as a coordination point for Mg(2+). 2 residues coordinate Mg(2+): N719 and I721. A coiled-coil region spans residues 824–855; sequence DISMKEAEDALRDYQGQLEQVFNEVRELEKHE. Residue H1061 participates in 2-oxoglutarate binding. Residues T1079, R1095, K1130, S1133, Q1183, R1190, and R1191 each coordinate acetyl-CoA.

It belongs to the 2-oxoacid dehydrogenase family. Kgd subfamily. As to quaternary structure, homodimer. The 2-oxoglutarate dehydrogenase (ODH) complex contains multiple copies of three enzymatic components: 2-oxoglutarate dehydrogenase (E1), dihydrolipoamide succinyltransferase (E2) and lipoamide dehydrogenase (E3). It depends on Mg(2+) as a cofactor. Requires thiamine diphosphate as cofactor.

It catalyses the reaction glyoxylate + 2-oxoglutarate + H(+) = 2-hydroxy-3-oxoadipate + CO2. The enzyme catalyses 2-oxoglutarate + H(+) = succinate semialdehyde + CO2. The catalysed reaction is N(6)-[(R)-lipoyl]-L-lysyl-[protein] + 2-oxoglutarate + H(+) = N(6)-[(R)-S(8)-succinyldihydrolipoyl]-L-lysyl-[protein] + CO2. It carries out the reaction N(6)-[(R)-dihydrolipoyl]-L-lysyl-[protein] + succinyl-CoA = N(6)-[(R)-S(8)-succinyldihydrolipoyl]-L-lysyl-[protein] + CoA. Its pathway is carbohydrate metabolism; tricarboxylic acid cycle; succinate from 2-oxoglutarate (transferase route): step 1/2. It functions in the pathway carbohydrate metabolism; tricarboxylic acid cycle; succinyl-CoA from 2-oxoglutarate (dehydrogenase route): step 1/1. With respect to regulation, alpha-ketoglutarate dehydrogenase and decarboxylase activities are inhibited by unphosphorylated GarA, and allosterically activated by acetyl-CoA, the main substrate of the TCA cycle. In terms of biological role, shows three enzymatic activities that share a first common step, the attack of thiamine-PP on 2-oxoglutarate (alpha-ketoglutarate, KG), leading to the formation of an enamine-thiamine-PP intermediate upon decarboxylation. Thus, displays KGD activity, catalyzing the decarboxylation from five-carbon 2-oxoglutarate to four-carbon succinate semialdehyde (SSA). Also catalyzes C-C bond formation between the activated aldehyde formed after decarboxylation of alpha-ketoglutarate and the carbonyl of glyoxylate (GLX), to yield 2-hydroxy-3-oxoadipate (HOA), which spontaneously decarboxylates to form 5-hydroxylevulinate (HLA). And is also a component of the 2-oxoglutarate dehydrogenase (ODH) complex, that catalyzes the overall conversion of 2-oxoglutarate to succinyl-CoA and CO(2). The KG decarboxylase and KG dehydrogenase reactions provide two alternative, tightly regulated, pathways connecting the oxidative and reductive branches of the TCA cycle. This Mycobacterium sp. (strain KMS) protein is Multifunctional 2-oxoglutarate metabolism enzyme (kgd).